Consider the following 201-residue polypeptide: Histone-like protein HC2 (201 aa).

Residues 1–69 (MLGVQKKCST…VAKKATAKKA (69 aa)) form a disordered region. Basic residues-rich tracts occupy residues 8 to 50 (CSTR…KTVA) and 59 to 69 (PVAKKATAKKA).

Belongs to the histone H1/H5 family. HCT subfamily.

In terms of biological role, might have a role in establishing the nucleoid structure of elementary bodies. In Chlamydia trachomatis serovar D (strain ATCC VR-885 / DSM 19411 / UW-3/Cx), this protein is Histone-like protein HC2 (hctB).